The primary structure comprises 535 residues: CTP synthase (535 aa).

The tract at residues 1-267 is amidoligase domain; the sequence is MTKYIFVTGG…DKLVCEHMKL (267 aa). Serine 13 lines the CTP pocket. A UTP-binding site is contributed by serine 13. 14–19 is an ATP binding site; it reads SLGKGI. Residue tyrosine 54 coordinates L-glutamine. Aspartate 71 is an ATP binding site. Mg(2+) is bound by residues aspartate 71 and glutamate 141. Residues 148 to 150, 188 to 193, and lysine 224 contribute to the CTP site; these read DIE and KTKPTQ. UTP is bound by residues 188 to 193 and lysine 224; that span reads KTKPTQ. Positions 292–534 constitute a Glutamine amidotransferase type-1 domain; sequence TIGLVGKYVE…IGASVEAANQ (243 aa). Glycine 354 contributes to the L-glutamine binding site. Cysteine 381 serves as the catalytic Nucleophile; for glutamine hydrolysis. Residues 382–385, glutamate 405, and arginine 462 each bind L-glutamine; that span reads LGMQ. Catalysis depends on residues histidine 507 and glutamate 509.

The protein belongs to the CTP synthase family. In terms of assembly, homotetramer. Interacts with BrxC.

The catalysed reaction is UTP + L-glutamine + ATP + H2O = CTP + L-glutamate + ADP + phosphate + 2 H(+). It catalyses the reaction L-glutamine + H2O = L-glutamate + NH4(+). The enzyme catalyses UTP + NH4(+) + ATP = CTP + ADP + phosphate + 2 H(+). The protein operates within pyrimidine metabolism; CTP biosynthesis via de novo pathway; CTP from UDP: step 2/2. With respect to regulation, allosterically activated by GTP, when glutamine is the substrate; GTP has no effect on the reaction when ammonia is the substrate. The allosteric effector GTP functions by stabilizing the protein conformation that binds the tetrahedral intermediate(s) formed during glutamine hydrolysis. Inhibited by the product CTP, via allosteric rather than competitive inhibition. Catalyzes the ATP-dependent amination of UTP to CTP with either L-glutamine or ammonia as the source of nitrogen. Regulates intracellular CTP levels through interactions with the four ribonucleotide triphosphates. This is CTP synthase from Bacillus subtilis (strain 168).